The following is a 547-amino-acid chain: Glucose-6-phosphate isomerase (547 aa).

Glu-353 serves as the catalytic Proton donor. Active-site residues include His-384 and Lys-512.

This sequence belongs to the GPI family.

The protein resides in the cytoplasm. It catalyses the reaction alpha-D-glucose 6-phosphate = beta-D-fructose 6-phosphate. It participates in carbohydrate biosynthesis; gluconeogenesis. It functions in the pathway carbohydrate degradation; glycolysis; D-glyceraldehyde 3-phosphate and glycerone phosphate from D-glucose: step 2/4. Functionally, catalyzes the reversible isomerization of glucose-6-phosphate to fructose-6-phosphate. The sequence is that of Glucose-6-phosphate isomerase from Glaesserella parasuis serovar 5 (strain SH0165) (Haemophilus parasuis).